The sequence spans 84 residues: Putative membrane protein insertion efficiency factor (84 aa).

Belongs to the UPF0161 family.

Its subcellular location is the cell inner membrane. Could be involved in insertion of integral membrane proteins into the membrane. This is Putative membrane protein insertion efficiency factor from Shewanella oneidensis (strain ATCC 700550 / JCM 31522 / CIP 106686 / LMG 19005 / NCIMB 14063 / MR-1).